Reading from the N-terminus, the 989-residue chain is DNA-directed RNA polymerase subunit beta' (989 aa).

Residues Asp383, Asp385, and Asp387 each contribute to the Mg(2+) site.

It belongs to the RNA polymerase beta' chain family. In terms of assembly, the RNAP catalytic core consists of 2 alpha, 1 beta, 1 beta' and 1 omega subunit. When a sigma factor is associated with the core the holoenzyme is formed, which can initiate transcription. Requires Mg(2+) as cofactor.

The catalysed reaction is RNA(n) + a ribonucleoside 5'-triphosphate = RNA(n+1) + diphosphate. DNA-dependent RNA polymerase catalyzes the transcription of DNA into RNA using the four ribonucleoside triphosphates as substrates. In Leuconostoc pseudomesenteroides, this protein is DNA-directed RNA polymerase subunit beta' (rpoC).